Consider the following 314-residue polypeptide: Protein YIF1B (314 aa).

Residue M1 is modified to N-acetylmethionine. Low complexity predominate over residues 1-12 (MHPAGLAAAAAG). Positions 1 to 55 (MHPAGLAAAAAGTPRLRKWPSKRRIPVSQPGMADPHQLFDDTSSAQSRGYGAQRA) are disordered. Residues 1–156 (MHPAGLAAAA…APRFDVNAPD (156 aa)) lie on the Cytoplasmic side of the membrane. Residue T13 is modified to Phosphothreonine. Residues 15–25 (RLRKWPSKRRI) are compositionally biased toward basic residues. S65 carries the phosphoserine modification. The chain crosses the membrane as a helical span at residues 157–177 (LYIPAMAFITYVLVAGLALGT). Residues 178 to 192 (QDRFSPDLLGLQASS) are Extracellular-facing. The helical transmembrane segment at 193 to 213 (ALAWLTLEVLAILLSLYLVTV) threads the bilayer. Residues 214-219 (NTDLTT) lie on the Cytoplasmic side of the membrane. Residues 220–240 (IDLVAFLGYKYVGMIGGVLMG) traverse the membrane as a helical segment. Position 241 (L241) is a topological domain, extracellular. A helical transmembrane segment spans residues 242 to 262 (LFGKIGYYLVLGWCCVAIFVF). The Cytoplasmic segment spans residues 263–292 (MIRTLRLKILADAAAEGVPVRGARNQLRMY). Residues 293-313 (LTMAVAAAQPMLMYWLTFHLV) traverse the membrane as a helical segment. A topological domain (extracellular) is located at residue R314.

It belongs to the YIF1 family. As to quaternary structure, interacts with HTR1A (via C-terminus). Interacts with ABCB9 (via TMD0); this interaction allows (but is not essential) the ER-to-Golgi trafficking and strongly depends on a salt bridge within TMD0.

The protein localises to the endoplasmic reticulum membrane. It localises to the golgi apparatus membrane. Its subcellular location is the endoplasmic reticulum-Golgi intermediate compartment membrane. In terms of biological role, functions in endoplasmic reticulum to Golgi vesicle-mediated transport and regulates the proper organization of the endoplasmic reticulum and the Golgi. Plays a key role in targeting to neuronal dendrites receptors such as HTR1A. Plays also a role in primary cilium and sperm flagellum assembly probably through protein transport to these compartments. In Homo sapiens (Human), this protein is Protein YIF1B.